Reading from the N-terminus, the 358-residue chain is Trans-enoyl reductase milB (358 aa).

NADP(+)-binding positions include 48 to 51 (VDTK), 170 to 173 (ATAT), 193 to 196 (SAKH), Tyr211, 258 to 259 (LD), and 349 to 350 (VR).

It belongs to the zinc-containing alcohol dehydrogenase family. Monomer.

It catalyses the reaction 10 malonyl-CoA + acetyl-CoA + 3 AH2 + 8 NADPH + 18 H(+) = cordypyrone A + 3 A + 10 CO2 + 8 NADP(+) + 11 CoA + 8 H2O. It participates in secondary metabolite biosynthesis. Its function is as follows. Trans-enoyl reductase; part of the gene cluster that mediates the biosynthesis of cordypyrones A and B, 2 pyrones that show modest activities against pathogenic bacteria including methicillin-resistant Staphylococcus aureus (MRSA), Mycobacterium tuberculosis and Bacillus cereus. The HR-PKS milA catalyzes the formation of cordypyrones A via condensation of one acetate with 10 malonate units. Since milA lacks an enoyl reductase domain, the 2 beta-keto processing domains DH and KR of milA collaborate with the trans-enoyl reductase milB to catalyze the different levels of reduction. The cytochrome P450 monooxygenase milC then hydroxylates the C-22 of cordypyrones A to yield cordypyrones B. The chain is Trans-enoyl reductase milB from Cordyceps militaris (strain CM01) (Caterpillar fungus).